Here is a 267-residue protein sequence, read N- to C-terminus: Phosphate import ATP-binding protein PstB (267 aa).

The ABC transporter domain maps to Val21 to Ile262. Position 53-60 (Gly53–Ser60) interacts with ATP.

The protein belongs to the ABC transporter superfamily. Phosphate importer (TC 3.A.1.7) family. In terms of assembly, the complex is composed of two ATP-binding proteins (PstB), two transmembrane proteins (PstC and PstA) and a solute-binding protein (PstS).

Its subcellular location is the cell inner membrane. The enzyme catalyses phosphate(out) + ATP + H2O = ADP + 2 phosphate(in) + H(+). Functionally, part of the ABC transporter complex PstSACB involved in phosphate import. Responsible for energy coupling to the transport system. This chain is Phosphate import ATP-binding protein PstB, found in Xanthomonas oryzae pv. oryzae (strain MAFF 311018).